The chain runs to 64 residues: Large ribosomal subunit protein bL28 (64 aa).

Positions 1-23 (MSKECYFTGRKTVSSNNRSHAMN) are disordered. Over residues 11–23 (KTVSSNNRSHAMN) the composition is skewed to polar residues.

It belongs to the bacterial ribosomal protein bL28 family.

The sequence is that of Large ribosomal subunit protein bL28 from Lactococcus lactis subsp. cremoris (strain SK11).